Reading from the N-terminus, the 147-residue chain is Large ribosomal subunit protein uL15 (147 aa).

Positions 1-46 are disordered; it reads MSIRLENLSYTPGARKEKHRKGRGHAAGKGKQAGRGQSGQKKRSTV. A compositionally biased stretch (basic residues) spans 16 to 28; the sequence is KEKHRKGRGHAAG.

This sequence belongs to the universal ribosomal protein uL15 family. As to quaternary structure, part of the 50S ribosomal subunit.

Binds to the 23S rRNA. The polypeptide is Large ribosomal subunit protein uL15 (Mesomycoplasma hyopneumoniae (strain J / ATCC 25934 / NCTC 10110) (Mycoplasma hyopneumoniae)).